The following is a 346-amino-acid chain: Growth hormone-inducible transmembrane protein (346 aa).

Residues 1-45 (MLAARLVCLRTLPSRVFQPTFITKASPLVKNSITKNQWLLTPSRE) constitute a mitochondrion transit peptide. At 46–83 (YATKTRIRTHRGKTGQELKEAALEPSLEKVFKIDQMGK) the chain is on the mitochondrial matrix side. The chain crosses the membrane as a helical span at residues 84–104 (WFVAGGAAVGLGALCYYGLGM). At 105–126 (SNEIGAIEKAVIWPQYVKDRIH) the chain is on the mitochondrial intermembrane side. The chain crosses the membrane as a helical span at residues 127 to 147 (STYMYLAGSIGLTALSALALA). The Mitochondrial matrix segment spans residues 148 to 160 (RSPALMNFMMTGS). Residues 161–181 (WMTIGATFAAMIGAGMLVQSI) traverse the membrane as a helical segment. The Mitochondrial intermembrane segment spans residues 182–191 (SYEQSPGPKH). The helical transmembrane segment at 192 to 212 (LAWMLHSGVMGAVVAPLTILG) threads the bilayer. Over 213-214 (GP) the chain is Mitochondrial matrix. The chain crosses the membrane as a helical span at residues 215–235 (LLLRAAWYTAGIVGGLSTVAM). Over 236–245 (CAPSEKFLNM) the chain is Mitochondrial intermembrane. Residues 246 to 266 (GAPLGVGLGLVFASSLGSMFL) traverse the membrane as a helical segment. At 267-272 (PPTSVA) the chain is on the mitochondrial matrix side. Residues 273-293 (GATLYSVAMYGGLVLFSMFLL) traverse the membrane as a helical segment. At 294 to 346 (YDTQKVVKRAEITPAYGAQKYDPINSMLTIYMDTLNIFMRVATMLATGSNRKK) the chain is on the mitochondrial intermembrane side.

It belongs to the BI1 family. As to quaternary structure, interacts with LETM1 and AFG3L2. Undergoes AFG3L2-mediated proteolytic degradation, upon hyperpolarization of mitochondria.

The protein localises to the mitochondrion inner membrane. Its function is as follows. Plays an important role in maintenance of mitochondrial morphology and in mediating either calcium or potassium/proton antiport. Mediates proton-dependent calcium efflux from mitochondrion. Also functions as an electroneutral mitochondrial proton/potassium exchanger. Required for the mitochondrial tubular network and cristae organization. Involved in apoptotic release of cytochrome c. Inhibits AFG3L2 proteolytic activity, stimulating respiration and stabilizing respiratory enzymes in actively respiring mitochondria. However, when mitochondria become hyperpolarized, GHITM loses its inhibitory activity toward AFG3L2 and the now active AFG3L2 turns first on GHITM and, if hyperpolarization persists, on other proteins of the mitochondria, leading to a broad remodeling of the proteome. In Rattus norvegicus (Rat), this protein is Growth hormone-inducible transmembrane protein (Ghitm).